The chain runs to 488 residues: Proline--tRNA ligase (488 aa).

This sequence belongs to the class-II aminoacyl-tRNA synthetase family. ProS type 3 subfamily. Homodimer.

The protein localises to the cytoplasm. The enzyme catalyses tRNA(Pro) + L-proline + ATP = L-prolyl-tRNA(Pro) + AMP + diphosphate. Catalyzes the attachment of proline to tRNA(Pro) in a two-step reaction: proline is first activated by ATP to form Pro-AMP and then transferred to the acceptor end of tRNA(Pro). This Borrelia garinii subsp. bavariensis (strain ATCC BAA-2496 / DSM 23469 / PBi) (Borreliella bavariensis) protein is Proline--tRNA ligase.